A 443-amino-acid polypeptide reads, in one-letter code: ATP-dependent protease ATPase subunit HslU (443 aa).

Residues Ile-18, 60–65 (GVGKTE), Asp-256, Glu-321, and Arg-393 each bind ATP.

This sequence belongs to the ClpX chaperone family. HslU subfamily. In terms of assembly, a double ring-shaped homohexamer of HslV is capped on each side by a ring-shaped HslU homohexamer. The assembly of the HslU/HslV complex is dependent on binding of ATP.

It is found in the cytoplasm. ATPase subunit of a proteasome-like degradation complex; this subunit has chaperone activity. The binding of ATP and its subsequent hydrolysis by HslU are essential for unfolding of protein substrates subsequently hydrolyzed by HslV. HslU recognizes the N-terminal part of its protein substrates and unfolds these before they are guided to HslV for hydrolysis. The sequence is that of ATP-dependent protease ATPase subunit HslU from Buchnera aphidicola subsp. Schizaphis graminum (strain Sg).